A 314-amino-acid polypeptide reads, in one-letter code: Acetyl-coenzyme A carboxylase carboxyl transferase subunit alpha (314 aa).

Positions 32–289 (EIDMLEASLE…KSAFVAQLDS (258 aa)) constitute a CoA carboxyltransferase C-terminal domain.

The protein belongs to the AccA family. Acetyl-CoA carboxylase is a heterohexamer composed of biotin carboxyl carrier protein (AccB), biotin carboxylase (AccC) and two subunits each of ACCase subunit alpha (AccA) and ACCase subunit beta (AccD).

It localises to the cytoplasm. It catalyses the reaction N(6)-carboxybiotinyl-L-lysyl-[protein] + acetyl-CoA = N(6)-biotinyl-L-lysyl-[protein] + malonyl-CoA. It functions in the pathway lipid metabolism; malonyl-CoA biosynthesis; malonyl-CoA from acetyl-CoA: step 1/1. Its function is as follows. Component of the acetyl coenzyme A carboxylase (ACC) complex. First, biotin carboxylase catalyzes the carboxylation of biotin on its carrier protein (BCCP) and then the CO(2) group is transferred by the carboxyltransferase to acetyl-CoA to form malonyl-CoA. The chain is Acetyl-coenzyme A carboxylase carboxyl transferase subunit alpha from Staphylococcus aureus (strain NCTC 8325 / PS 47).